A 263-amino-acid polypeptide reads, in one-letter code: Norsolorinic acid ketoreductase stcE (263 aa).

NADP(+)-binding residues include Leu29, Asp76, Asn105, Tyr177, Lys181, Ile208, and Ser210. Tyr177 (proton donor) is an active-site residue. Lys181 acts as the Lowers pKa of active site Tyr in catalysis.

Belongs to the short-chain dehydrogenases/reductases (SDR) family.

The catalysed reaction is (1'S)-averantin + NADP(+) = norsolorinic acid + NADPH + H(+). It functions in the pathway mycotoxin biosynthesis; sterigmatocystin biosynthesis. In terms of biological role, short chain dehydrogenase; part of the gene cluster that mediates the biosynthesis of sterigmatocystin (ST), a polyketide-derived furanocoumarin which is part of the most toxic and carcinogenic compounds among the known mycotoxins. The first step in the biosynthesis of sterigmatocystin is the production of hexanoate by the fatty acid synthase (FAS) units stcJ and stcK. The polyketide backbone is assembled by the non-reducing polyketide synthase stcA by condensation of the starter hexanoyl-CoA and 7 malonyl-CoA extender units followed by cyclization and release of norsolorinic acid. Norsolorinic acid is the first stable intermediate in the biosynthesis of sterigmatocystin and is converted into averantin (AVN) by the ketoreductase stcE which reduces the hexanoate ketone to an alcohol. Averantin is then oxidized into 5'-hydroxyaverantin (HAVN) by the cytochrome P450 monooxygenase stcF. 5'-hydroxyaverantin is further converted to 5'-oxyaverantin (OAVN) by the 5'-hydroxyaverantin dehydrogenase stcG. The next step is the conversion of OAVN into averufin (AVF) which is catalyzed by a yet to be identified enzyme. The cytochrome P450 monooxygenase stcB and the flavin-binding monooxygenase stcW are both required for the conversion of averufin to 1-hydroxyversicolorone. The esterase stcI probably catalyzes the formation of versiconal hemiacetal acetate from 1-hydroxyversicolorone. The oxydoreductase stcN then probably catalyzes the biosynthetic step from versiconal to versicolorin B (VERB). The next step is performed by the versicolorin B desaturase stcL to produce versicolorin A (VERA). The ketoreductase stcU and the cytochrome P450 monooxygenase stcS are involved in the conversion of versicolorin A to demethylsterigmatocystin. The Baeyer-Villiger oxidas stcQ and the reductase stcR might be involved in the biosynthetic step from versicolorin A to demethylsterigmatocystin. The final step in the biosynthesis of sterigmatocystin is the methylation of demethylsterigmatocystin catalyzed by the methyltransferase stcP. This is Norsolorinic acid ketoreductase stcE from Emericella nidulans (strain FGSC A4 / ATCC 38163 / CBS 112.46 / NRRL 194 / M139) (Aspergillus nidulans).